A 761-amino-acid chain; its full sequence is Protein PHTF1 (761 aa).

One can recognise a PHTF domain in the interval 6-150 (RDAISWYQKK…VHCQIVSTQI (145 aa)). The next 3 helical transmembrane spans lie at 77–97 (GLVR…VTSL), 99–119 (IFVW…LYLL), and 121–141 (PIVS…MGTV). A disordered region spans residues 152-184 (RPSGNNGNRRRRKLRKTVNGDGSRDNGNNSPDK). Low complexity predominate over residues 170–181 (NGDGSRDNGNNS). N-linked (GlcNAc...) asparagine glycans are attached at residues Asn-179 and Asn-224. A phosphoserine mark is found at Ser-272, Ser-276, Ser-277, Ser-333, and Ser-335. A disordered region spans residues 345 to 414 (VFSQGSRSGM…NTIHSGTKRD (70 aa)). A compositionally biased stretch (low complexity) spans 347–363 (SQGSRSGMSGGSRSLNL). A glycan (N-linked (GlcNAc...) asparagine) is linked at Asn-362. Residues 364-375 (SRRDSESTRHDS) are compositionally biased toward basic and acidic residues. A glycan (N-linked (GlcNAc...) asparagine) is linked at Asn-430. The next 4 helical transmembrane spans lie at 472 to 492 (GVGY…FPFL), 514 to 534 (TLFC…INFI), 610 to 630 (VVVS…CAQV), and 644 to 664 (WEFL…ASLG). Asn-673 and Asn-732 each carry an N-linked (GlcNAc...) asparagine glycan. A helical transmembrane segment spans residues 736–756 (VVILSAVSGVISDLLGFNIRL).

As to quaternary structure, interacts with FEM1B. As to expression, widely expressed with highest levels in testis.

It is found in the endoplasmic reticulum membrane. It localises to the golgi apparatus. Its subcellular location is the cis-Golgi network membrane. The protein is Protein PHTF1 of Mus musculus (Mouse).